The following is a 412-amino-acid chain: Glucose-1-phosphate adenylyltransferase (412 aa).

Alpha-D-glucose 1-phosphate-binding positions include Gly169, 184–185 (EK), and Ser201.

The protein belongs to the bacterial/plant glucose-1-phosphate adenylyltransferase family. In terms of assembly, homotetramer.

It catalyses the reaction alpha-D-glucose 1-phosphate + ATP + H(+) = ADP-alpha-D-glucose + diphosphate. Its pathway is glycan biosynthesis; glycogen biosynthesis. Functionally, involved in the biosynthesis of ADP-glucose, a building block required for the elongation reactions to produce glycogen. Catalyzes the reaction between ATP and alpha-D-glucose 1-phosphate (G1P) to produce pyrophosphate and ADP-Glc. This Geobacter metallireducens (strain ATCC 53774 / DSM 7210 / GS-15) protein is Glucose-1-phosphate adenylyltransferase.